We begin with the raw amino-acid sequence, 409 residues long: LL-diaminopimelate aminotransferase (409 aa).

The substrate site is built by Tyr15 and Gly42. Residues Tyr72, 108 to 109 (SK), Tyr132, Asn187, Tyr218, and 246 to 248 (SFS) contribute to the pyridoxal 5'-phosphate site. Positions 109, 132, and 187 each coordinate substrate. Lys249 is modified (N6-(pyridoxal phosphate)lysine). Pyridoxal 5'-phosphate contacts are provided by Arg257 and Asn292. Positions 292 and 388 each coordinate substrate.

The protein belongs to the class-I pyridoxal-phosphate-dependent aminotransferase family. LL-diaminopimelate aminotransferase subfamily. Homodimer. Pyridoxal 5'-phosphate is required as a cofactor.

The catalysed reaction is (2S,6S)-2,6-diaminopimelate + 2-oxoglutarate = (S)-2,3,4,5-tetrahydrodipicolinate + L-glutamate + H2O + H(+). It participates in amino-acid biosynthesis; L-lysine biosynthesis via DAP pathway; LL-2,6-diaminopimelate from (S)-tetrahydrodipicolinate (aminotransferase route): step 1/1. In terms of biological role, involved in the synthesis of meso-diaminopimelate (m-DAP or DL-DAP), required for both lysine and peptidoglycan biosynthesis. Catalyzes the direct conversion of tetrahydrodipicolinate to LL-diaminopimelate. The protein is LL-diaminopimelate aminotransferase of Acaryochloris marina (strain MBIC 11017).